A 642-amino-acid polypeptide reads, in one-letter code: MGIPLTWMLLVMMVTSWFTLAEASNSTEARRCSECHNNATCTVDGVVTTCSCQTGFTGDGLVCEDMDECATPWTHNCSNSSCVNTPGSFKCSCQDGFRLTPELSCTDVDECSEQGLSNCHALATCVNTEGDYLCVCPEGFTGDGWYCECSPGSCEPGLDCLPQGPDGKLVCQDPCNTYETLTEYWRSTEYGVGYSCDAGLHGWYRFTGQGGVRMAETCVPVLRCNTAAPMWLNGSHPSSSEGIVSRTACAHWSDQCCRWSTEIQVKACPGGFYIYNLTAPPECNLAYCTDPSSVEGTCEECRVDEDCISDNGRWRCQCKQDSNITDVSQLEYRLECGANDIKMSLRKCQLQSLGFMNVFMYLNDRQCSGFSESDERDWMSIVTPARNGPCGTVLRRNETHATYSNTLYLANAIIIRDIIIRMNFECSYPLDMKVSLKTSLQPMVSALNISLGGTGKFTVRMALFQSPTYTQPHQGPSVMLSTEAFLYVGTMLDGGDLSRFVLLMTNCYATPSSNSTDPVKYFIIQDSCPRTEDTTIQVTENGESSQARFSVQMFRFAGNYDLVYLHCEVYLCDSTSEQCKPTCSGTRFRSGNFIDQTRVLNLGPITRQGVQASVSKAASSNLRLLSIWLLLFPSATLIFMVQ.

A signal peptide spans 1 to 24 (MGIPLTWMLLVMMVTSWFTLAEAS). Asn-25 and Asn-38 each carry an N-linked (GlcNAc...) asparagine glycan. One can recognise an EGF-like 1 domain in the interval 28–64 (EARRCSECHNNATCTVDGVVTTCSCQTGFTGDGLVCE). Disulfide bonds link Cys-32-Cys-41, Cys-35-Cys-50, Cys-52-Cys-63, Cys-69-Cys-82, Cys-77-Cys-91, Cys-93-Cys-105, Cys-111-Cys-125, Cys-119-Cys-134, Cys-136-Cys-147, Cys-149-Cys-160, Cys-154-Cys-171, Cys-175-Cys-268, Cys-196-Cys-283, Cys-218-Cys-256, Cys-224-Cys-288, Cys-249-Cys-257, Cys-298-Cys-307, Cys-301-Cys-316, Cys-318-Cys-348, Cys-336-Cys-426, and Cys-367-Cys-390. The EGF-like 2; calcium-binding domain maps to 65–106 (DMDECATPWTHNCSNSSCVNTPGSFKCSCQDGFRLTPELSCT). Asn-76 and Asn-79 each carry an N-linked (GlcNAc...) asparagine glycan. In terms of domain architecture, EGF-like 3; calcium-binding spans 107-148 (DVDECSEQGLSNCHALATCVNTEGDYLCVCPEGFTGDGWYCE). A beta hairpin region spans residues 149–172 (CSPGSCEPGLDCLPQGPDGKLVCQ). A D10C region spans residues 173–292 (DPCNTYETLT…CNLAYCTDPS (120 aa)). The N-linked (GlcNAc...) asparagine glycan is linked to Asn-233. The N-linked (GlcNAc...) asparagine glycan is linked to Asn-276. One can recognise an EGF-like 4 domain in the interval 293 to 324 (SVEGTCEECRVDEDCISDNGRWRCQCKQDSNI). Asn-323 is a glycosylation site (N-linked (GlcNAc...) asparagine). Residues 335–430 (ECGANDIKMS…RMNFECSYPL (96 aa)) form a ZP-N region. One can recognise a ZP domain in the interval 335-590 (ECGANDIKMS…PTCSGTRFRS (256 aa)). Residues Asn-397 and Asn-448 are each glycosylated (N-linked (GlcNAc...) asparagine). The tract at residues 431–454 (DMKVSLKTSLQPMVSALNISLGGT) is flexible ZP-N/ZP-C linker; important for secretion and polymerization into filaments. Residues 455-465 (GKFTVRMALFQ) are internal hydrophobic patch (IHP). Residues 455-590 (GKFTVRMALF…PTCSGTRFRS (136 aa)) form a ZP-C region. Cystine bridges form between Cys-507–Cys-567, Cys-528–Cys-583, and Cys-572–Cys-579. Asn-514 carries N-linked (GlcNAc...) asparagine glycosylation. The interval 587–590 (RFRS) is essential for cleavage by HPN. The tract at residues 599-607 (VLNLGPITR) is external hydrophobic patch (EHP); regulates polymerization into filaments. Ala-618 carries the GPI-anchor amidated alanine lipid modification. Positions 619–642 (SSNLRLLSIWLLLFPSATLIFMVQ) are cleaved as a propeptide — removed in mature form.

Homodimer that then polymerizes into long filaments. The filaments can additionally assemble laterally to form a sheet. The filaments consist of a zigzag-shaped backbone with laterally protruding arms which interact with bacterial adhesin fimH. Two fimH molecules can bind to a single UMOD monomer. N-glycosylated. In terms of processing, proteolytically cleaved at a conserved C-terminal proteolytic cleavage site to generate the secreted form found in urine. This cleavage is catalyzed by HPN. Detected in urine (secreted form). Detected in kidney thick ascending limb epithelial cells (at protein level).

It is found in the secreted. The protein resides in the apical cell membrane. The protein localises to the basolateral cell membrane. Its subcellular location is the cell projection. It localises to the cilium membrane. Functions in biogenesis and organization of the apical membrane of epithelial cells of the thick ascending limb of Henle's loop (TALH), where it promotes formation of complex filamentous gel-like structure that may play a role in the water barrier permeability. May serve as a receptor for binding and endocytosis of cytokines (IL-1, IL-2) and TNF. Facilitates neutrophil migration across renal epithelia. In terms of biological role, in the urine, may contribute to colloid osmotic pressure, retards passage of positively charged electrolytes and inhibits formation of liquid containing supersaturated salts and subsequent formation of salt crystals. Protects against urinary tract infections by binding to type 1 fimbriated E.coli. Binds to the bacterial adhesin fimH which mediates the stable formation of bacterial aggregates, prevents the binding of E.coli to uroplakins UPK1A and UPK1B which act as urothelial receptors for type I fimbriae, and allows for pathogen clearance through micturation. Also promotes aggregation of other bacteria including K.pneumoniae, P.aeruginosa and S.mitis and so may also protect against other uropathogens. The polypeptide is Uromodulin (Umod) (Mus musculus (Mouse)).